The primary structure comprises 120 residues: Dense granule protein 5 (120 aa).

The signal sequence occupies residues 1–25; the sequence is MASVKRVVVAVMIVNVLALIFVGVA. A disordered region spans residues 27–59; that stretch reads STRDVGSGGDDSEGARGREQQQVQQHEQNEDRS. The chain crosses the membrane as a helical span at residues 76 to 93; it reads AVGLAAAVVAVVSLLRLL. The span at 100 to 109 shows a compositional bias: basic and acidic residues; the sequence is AIQEESKESA. A disordered region spans residues 100–120; it reads AIQEESKESATAEEEEVAEEE. Acidic residues predominate over residues 110–120; the sequence is TAEEEEVAEEE.

It is found in the secreted. It localises to the parasitophorous vacuole lumen. The protein resides in the parasitophorous vacuole membrane. The protein localises to the cytoplasmic vesicle. Its subcellular location is the secretory vesicle. In terms of biological role, plays a role in the function of the cyst and parasitophorous vacuole membranes and therefore in host-parasite interactions. This Toxoplasma gondii protein is Dense granule protein 5 (GRA5).